Here is a 204-residue protein sequence, read N- to C-terminus: Recombination protein RecR (204 aa).

A C4-type zinc finger spans residues 58 to 75; that stretch reads CSICQNVTDRGDDPCSIC. Residues 83–181 enclose the Toprim domain; sequence SKICVVESPP…EVTKIARGIP (99 aa).

Belongs to the RecR family.

May play a role in DNA repair. It seems to be involved in an RecBC-independent recombinational process of DNA repair. It may act with RecF and RecO. This chain is Recombination protein RecR, found in Chlorobium phaeobacteroides (strain BS1).